We begin with the raw amino-acid sequence, 410 residues long: Sprouty-related, EVH1 domain-containing protein 2 (410 aa).

The 118-residue stretch at 5–122 (THPDDDSYIV…RGVRKAIEDL (118 aa)) folds into the WH1 domain. The interval 127–171 (TTSSSTIHNEAELGDDDVFTTATDSSSNSSQKREPNTRTISSPTS) is disordered. Over residues 146 to 156 (TTATDSSSNSS) the composition is skewed to polar residues. The KBD domain occupies 197–252 (SYPQVTFPEDDEEIVRINPREKIWMTGYEDYRHAPVRGKYLDSTEDADSYVRFAKG). Residues Tyr224 and Tyr227 each carry the phosphotyrosine modification. Residues 274–294 (DPKGNVIKTQPPRAKSRRRKE) form a disordered region. One can recognise an SPR domain in the interval 300–408 (RCVYCRDMFN…CRCCGGKHKA (109 aa)).

As to quaternary structure, homodimer and heterodimer. Able to interact with SPRED1 to form heterodimers. Interacts with RAS. May interact with ZDHHC13 (via ANK repeats) and ZDHHC17 (via ANK repeats). Interacts with TESK1. Interacts with NF1. Phosphorylated on serine and threonine residues. Phosphorylated on tyrosine. Phosphorylation of Tyr-224 and Tyr-227 are required for ubiquitination. In terms of processing, ubiquitinated; leading to degradation by the proteasome. As to expression, expressed in the eye, with higher expression in lens epithelium than in lens fiber cells at postnatal day 15.

Its subcellular location is the cell membrane. It is found in the cytoplasmic vesicle. It localises to the secretory vesicle membrane. The protein localises to the cytoplasm. Functionally, negatively regulates Ras signaling pathways and downstream activation of MAP kinases. Recruits and translocates NF1 to the cell membrane, thereby enabling NF1-dependent hydrolysis of active GTP-bound Ras to inactive GDP-bound Ras. Inhibits fibroblast growth factor (FGF)-induced retinal lens fiber differentiation, probably by inhibiting FGF-mediated phosphorylation of ERK1/2. Inhibits TGFB-induced epithelial-to-mesenchymal transition in lens epithelial cells. This chain is Sprouty-related, EVH1 domain-containing protein 2 (Spred2), found in Rattus norvegicus (Rat).